We begin with the raw amino-acid sequence, 305 residues long: tRNA dimethylallyltransferase 1 (305 aa).

Position 10–17 (10–17 (GPTASGKT)) interacts with ATP. 12-17 (TASGKT) serves as a coordination point for substrate. Residues 35–38 (DSRQ) are interaction with substrate tRNA.

This sequence belongs to the IPP transferase family. As to quaternary structure, monomer. Requires Mg(2+) as cofactor.

It catalyses the reaction adenosine(37) in tRNA + dimethylallyl diphosphate = N(6)-dimethylallyladenosine(37) in tRNA + diphosphate. Its function is as follows. Catalyzes the transfer of a dimethylallyl group onto the adenine at position 37 in tRNAs that read codons beginning with uridine, leading to the formation of N6-(dimethylallyl)adenosine (i(6)A). This is tRNA dimethylallyltransferase 1 from Syntrophus aciditrophicus (strain SB).